The chain runs to 1940 residues: Cilia- and flagella-associated protein 74 (1940 aa).

A disordered region spans residues 52 to 90 (GSPAVTLRRAKAAAAANGTSSPGIRGSPSPARGPGGRLP). A compositionally biased stretch (low complexity) spans 63 to 90 (AAAAANGTSSPGIRGSPSPARGPGGRLP). A coiled-coil region spans residues 100–159 (ANVEQLKRRLQTVVAEVEGHQQRYDKVLLEANKATDLVHSMEAEIESLYVEAEELARRVP). 5 disordered regions span residues 512-548 (VAGL…QSLT), 1159-1336 (SPHV…AAAE), 1373-1418 (PQSQ…AAPP), 1714-1737 (AGDK…GASK), and 1894-1940 (PGSR…KKAV). Residues 535 to 548 (SLTQQLAATQQSLT) are compositionally biased toward low complexity. Gly residues predominate over residues 1205–1220 (DGGGGGAMANGNGSGG). Acidic residues predominate over residues 1227-1236 (DGEPEDGEGD). Over residues 1260-1271 (GRGGRGGRGGAA) the composition is skewed to gly residues. Over residues 1272-1282 (GEDEDEDEDAG) the composition is skewed to acidic residues. Low complexity predominate over residues 1287-1304 (RGKSSSSSKASSGRRSSS). Residues 1321 to 1335 (VPDDDDADAEAEAAA) show a composition bias toward acidic residues. Low complexity predominate over residues 1373 to 1414 (PQSQNPTPSQSQSGQAPAASAPSDGASGAAAAAETAASSGPA). 2 stretches are compositionally biased toward pro residues: residues 1720-1731 (TPAPGIKPPATP) and 1896-1912 (SRPP…PAPE). The segment covering 1913 to 1929 (PVAASGPGAGAAGVKKL) has biased composition (low complexity). The segment covering 1930 to 1940 (VPPPSPPKKAV) has biased composition (pro residues).

It belongs to the CFAP74 family. As to quaternary structure, part of the PDCP1 complex composed of CFAP46, CFAP54, CFAP74 and CFAP221; the PDCP1 complex binds calmodulin.

The protein localises to the cytoplasm. It localises to the cytoskeleton. The protein resides in the cilium axoneme. Functionally, as part of the central apparatus of the cilium axoneme may play a role in cilium movement and thereby cell motility. The sequence is that of Cilia- and flagella-associated protein 74 from Chlamydomonas reinhardtii (Chlamydomonas smithii).